We begin with the raw amino-acid sequence, 534 residues long: NAD(P)H-quinone oxidoreductase chain 4 (534 aa).

14 helical membrane passes run 12-32 (FPWL…IPFF), 44-64 (FALS…INGF), 96-116 (MPLI…AWPV), 120-140 (PKLF…VFAV), 144-164 (LLFF…LAIW), 176-196 (FIIY…AMGF), 220-240 (ILCY…VPLH), 251-271 (TAPV…YALL), 285-305 (FAPL…LTSF), 314-334 (IAYS…SFSS), 340-360 (AMLQ…LVGA), 384-404 (FALW…SGFV), 425-445 (VVMA…LLSM), and 472-492 (VYII…PRLV).

It belongs to the complex I subunit 4 family.

It localises to the cellular thylakoid membrane. The catalysed reaction is a plastoquinone + NADH + (n+1) H(+)(in) = a plastoquinol + NAD(+) + n H(+)(out). It carries out the reaction a plastoquinone + NADPH + (n+1) H(+)(in) = a plastoquinol + NADP(+) + n H(+)(out). In terms of biological role, NDH-1 shuttles electrons from NAD(P)H, via FMN and iron-sulfur (Fe-S) centers, to quinones in the respiratory chain. The immediate electron acceptor for the enzyme in this species is believed to be plastoquinone. Couples the redox reaction to proton translocation (for every two electrons transferred, four hydrogen ions are translocated across the cytoplasmic membrane), and thus conserves the redox energy in a proton gradient. In Prochlorococcus marinus (strain MIT 9215), this protein is NAD(P)H-quinone oxidoreductase chain 4.